Reading from the N-terminus, the 334-residue chain is Phosphate acyltransferase (334 aa).

This sequence belongs to the PlsX family. Homodimer. Probably interacts with PlsY.

The protein localises to the cytoplasm. The catalysed reaction is a fatty acyl-[ACP] + phosphate = an acyl phosphate + holo-[ACP]. It participates in lipid metabolism; phospholipid metabolism. Catalyzes the reversible formation of acyl-phosphate (acyl-PO(4)) from acyl-[acyl-carrier-protein] (acyl-ACP). This enzyme utilizes acyl-ACP as fatty acyl donor, but not acyl-CoA. This Acholeplasma laidlawii (strain PG-8A) protein is Phosphate acyltransferase.